The sequence spans 504 residues: L-amino-acid oxidase (504 aa).

The first 18 residues, 1–18, serve as a signal peptide directing secretion; sequence MNVFFMFSLLFLAALGSC. C28 and C191 are oxidised to a cystine. Residues 61 to 62, 81 to 82, R89, and 105 to 108 contribute to the FAD site; these read MS, EA, and GPMR. R108 is a substrate binding site. N190 carries an N-linked (GlcNAc...) asparagine glycan. H241 is a binding site for substrate. V279 provides a ligand contact to FAD. A disulfide bridge links C349 with C430. N379 is a glycosylation site (N-linked (GlcNAc...) asparagine). Substrate is bound at residue Y390. Residues E475 and 482-487 contribute to the FAD site; that span reads GWIDST. A substrate-binding site is contributed by 482–483; the sequence is GW.

It belongs to the flavin monoamine oxidase family. FIG1 subfamily. Homodimer; non-covalently linked. It depends on FAD as a cofactor. In terms of tissue distribution, expressed by the venom gland.

The protein resides in the secreted. It catalyses the reaction an L-alpha-amino acid + O2 + H2O = a 2-oxocarboxylate + H2O2 + NH4(+). The enzyme catalyses L-leucine + O2 + H2O = 4-methyl-2-oxopentanoate + H2O2 + NH4(+). Catalyzes an oxidative deamination of predominantly hydrophobic and aromatic L-amino acids, thus producing hydrogen peroxide that may contribute to the diverse toxic effects of this enzyme. Shows activity on L-Leu. Exhibits diverse biological activities, such as hemorrhage, hemolysis, edema, antibacterial and antiparasitic activities, as well as regulation of platelet aggregation. Its effect on platelets is controversial, since it either induces aggregation or inhibits agonist-induced aggregation. These different effects are probably due to different experimental conditions. This protein induces apoptosis of cultured HeLa cells. The chain is L-amino-acid oxidase from Gloydius halys (Chinese water mocassin).